We begin with the raw amino-acid sequence, 44 residues long: U4-ctenitoxin-Co1a (44 aa).

Disulfide bonds link Cys2-Cys19, Cys9-Cys25, Cys18-Cys39, and Cys27-Cys37.

Expressed by the venom gland.

It localises to the secreted. Omega-agatoxins are antagonists of voltage-gated calcium channels (Cav). Toxic to mice by intracerebroventricular injection. In Ctenus ornatus (Brazilian spider), this protein is U4-ctenitoxin-Co1a.